We begin with the raw amino-acid sequence, 305 residues long: Acetylglutamate kinase (305 aa).

Substrate contacts are provided by residues 67-68 (GG), Arg-89, and Asn-190.

This sequence belongs to the acetylglutamate kinase family. ArgB subfamily.

It is found in the cytoplasm. The enzyme catalyses N-acetyl-L-glutamate + ATP = N-acetyl-L-glutamyl 5-phosphate + ADP. It participates in amino-acid biosynthesis; L-arginine biosynthesis; N(2)-acetyl-L-ornithine from L-glutamate: step 2/4. Catalyzes the ATP-dependent phosphorylation of N-acetyl-L-glutamate. In Bifidobacterium animalis subsp. lactis (strain AD011), this protein is Acetylglutamate kinase.